The primary structure comprises 401 residues: Tumor necrosis factor receptor superfamily member 11B (401 aa).

Residues 1-21 (MNKWLCCALLVFLDIIEWTTQ) form the signal peptide. TNFR-Cys repeat units lie at residues 24–62 (FPPKYLHYDPETGRQLLCDKCAPGTYLKQHCTVRRKTLC), 65–105 (CPDY…NRVC), 107–142 (CEEGRYLELEFCLKHRSCPPGLGVLQAGTPERNTVC), and 145–185 (CPDG…DNVC). Intrachain disulfides connect C41–C54, C44–C62, C65–C80, C83–C97, C87–C105, C107–C118, C124–C142, and C145–C160. N98 carries N-linked (GlcNAc...) asparagine glycosylation. N165 and N178 each carry an N-linked (GlcNAc...) asparagine glycan. Cysteines 166 and 185 form a disulfide. Death domains are found at residues 198–269 (DVTL…MVKK) and 270–365 (IIQD…THSL). An N-linked (GlcNAc...) asparagine glycan is attached at N289.

In terms of assembly, homodimer. Interacts with TNFSF10 and TNFSF11.

Its subcellular location is the secreted. Its function is as follows. Acts as a decoy receptor for TNFSF11/RANKL and thereby neutralizes its function in osteoclastogenesis. Inhibits the activation of osteoclasts and promotes osteoclast apoptosis in vitro. Bone homeostasis seems to depend on the local ratio between TNFSF11 and TNFRSF11B. May also play a role in preventing arterial calcification. May act as decoy receptor for TNFSF10/TRAIL and protect against apoptosis. TNFSF10/TRAIL binding blocks the inhibition of osteoclastogenesis. The sequence is that of Tumor necrosis factor receptor superfamily member 11B (Tnfrsf11b) from Rattus norvegicus (Rat).